Consider the following 349-residue polypeptide: Phosphate acyltransferase (349 aa).

The protein belongs to the PlsX family. In terms of assembly, homodimer. Probably interacts with PlsY.

The protein resides in the cytoplasm. It catalyses the reaction a fatty acyl-[ACP] + phosphate = an acyl phosphate + holo-[ACP]. It functions in the pathway lipid metabolism; phospholipid metabolism. In terms of biological role, catalyzes the reversible formation of acyl-phosphate (acyl-PO(4)) from acyl-[acyl-carrier-protein] (acyl-ACP). This enzyme utilizes acyl-ACP as fatty acyl donor, but not acyl-CoA. The chain is Phosphate acyltransferase from Rhodopseudomonas palustris (strain BisA53).